The sequence spans 559 residues: Sulfite reductase [NADPH] hemoprotein beta-component (559 aa).

Residues cysteine 423, cysteine 429, cysteine 468, and cysteine 472 each coordinate [4Fe-4S] cluster. A siroheme-binding site is contributed by cysteine 472.

The protein belongs to the nitrite and sulfite reductase 4Fe-4S domain family. In terms of assembly, alpha(8)-beta(8). The alpha component is a flavoprotein, the beta component is a hemoprotein. Siroheme serves as cofactor. Requires [4Fe-4S] cluster as cofactor.

The enzyme catalyses hydrogen sulfide + 3 NADP(+) + 3 H2O = sulfite + 3 NADPH + 4 H(+). The protein operates within sulfur metabolism; hydrogen sulfide biosynthesis; hydrogen sulfide from sulfite (NADPH route): step 1/1. Functionally, component of the sulfite reductase complex that catalyzes the 6-electron reduction of sulfite to sulfide. This is one of several activities required for the biosynthesis of L-cysteine from sulfate. This Thiocapsa roseopersicina protein is Sulfite reductase [NADPH] hemoprotein beta-component.